We begin with the raw amino-acid sequence, 394 residues long: Queuine tRNA-ribosyltransferase (394 aa).

D99 acts as the Proton acceptor in catalysis. Substrate is bound by residues 99–103 (DSGGF), D153, Q195, and G222. The tract at residues 253 to 259 (GVGHPED) is RNA binding. The active-site Nucleophile is D272. Residues 277-281 (TRTGR) are RNA binding; important for wobble base 34 recognition. C310, C312, C315, and H341 together coordinate Zn(2+).

This sequence belongs to the queuine tRNA-ribosyltransferase family. Homodimer. Within each dimer, one monomer is responsible for RNA recognition and catalysis, while the other monomer binds to the replacement base PreQ1. Zn(2+) is required as a cofactor.

The enzyme catalyses 7-aminomethyl-7-carbaguanine + guanosine(34) in tRNA = 7-aminomethyl-7-carbaguanosine(34) in tRNA + guanine. It functions in the pathway tRNA modification; tRNA-queuosine biosynthesis. In terms of biological role, catalyzes the base-exchange of a guanine (G) residue with the queuine precursor 7-aminomethyl-7-deazaguanine (PreQ1) at position 34 (anticodon wobble position) in tRNAs with GU(N) anticodons (tRNA-Asp, -Asn, -His and -Tyr). Catalysis occurs through a double-displacement mechanism. The nucleophile active site attacks the C1' of nucleotide 34 to detach the guanine base from the RNA, forming a covalent enzyme-RNA intermediate. The proton acceptor active site deprotonates the incoming PreQ1, allowing a nucleophilic attack on the C1' of the ribose to form the product. After dissociation, two additional enzymatic reactions on the tRNA convert PreQ1 to queuine (Q), resulting in the hypermodified nucleoside queuosine (7-(((4,5-cis-dihydroxy-2-cyclopenten-1-yl)amino)methyl)-7-deazaguanosine). The protein is Queuine tRNA-ribosyltransferase of Deinococcus radiodurans (strain ATCC 13939 / DSM 20539 / JCM 16871 / CCUG 27074 / LMG 4051 / NBRC 15346 / NCIMB 9279 / VKM B-1422 / R1).